A 575-amino-acid chain; its full sequence is Preprotein translocase subunit SCY2, chloroplastic (575 aa).

Residues 1–34 (MNSSQACFFHFSLRPISLSHPSYAFLSKRDPFLC) constitute a chloroplast transit peptide. 10 consecutive transmembrane segments (helical) span residues 157–177 (FVTA…LPGF), 206–226 (LSLF…MQVL), 251–271 (IWWL…YTSL), 285–305 (VMMT…LCDT), 306–326 (ISES…ILTG), 346–366 (LPYL…AVVV), 414–434 (TTYL…PFLL), 447–467 (GAPP…FNIF), 509–529 (FWGG…DHYL), and 531–551 (SINQ…GSII).

This sequence belongs to the SecY/SEC61-alpha family. Part of a second Sec protein translocation apparatus. Interacts probably with SECA2. Ubiquitous.

The protein resides in the plastid. Its subcellular location is the chloroplast membrane. It is found in the amyloplast membrane. It localises to the chloroplast thylakoid membrane. In terms of biological role, involved in protein export. Probably interacts with other proteins to allow the postimport or conservative sorting pathway for inner membrane proteins in plastids. Central subunit of the protein translocation channel SecYE. Consists of two halves formed by TMs 1-5 and 6-10. These two domains form a lateral gate at the front which open onto the bilayer between TMs 2 and 7, and are clamped together by SecE at the back. The channel is closed by both a pore ring composed of hydrophobic SecY resides and a short helix (helix 2A) on the extracellular side of the membrane which forms a plug. In Arabidopsis thaliana (Mouse-ear cress), this protein is Preprotein translocase subunit SCY2, chloroplastic (SCY2).